A 72-amino-acid polypeptide reads, in one-letter code: Large ribosomal subunit protein bL28 (72 aa).

Belongs to the bacterial ribosomal protein bL28 family.

This is Large ribosomal subunit protein bL28 from Chlorobaculum tepidum (strain ATCC 49652 / DSM 12025 / NBRC 103806 / TLS) (Chlorobium tepidum).